A 1222-amino-acid chain; its full sequence is ATP-dependent helicase/nuclease subunit A (1222 aa).

In terms of domain architecture, UvrD-like helicase ATP-binding spans 39-495 (QKRTAQQIEA…ILLKENFRSQ (457 aa)). 60-67 (ASAGSGKT) lines the ATP pocket. One can recognise a UvrD-like helicase C-terminal domain in the interval 524–810 (QLIAGSHAQT…NLMTIHKSKG (287 aa)).

This sequence belongs to the helicase family. AddA subfamily. As to quaternary structure, heterodimer of AddA and AddB/RexB. Requires Mg(2+) as cofactor.

It catalyses the reaction Couples ATP hydrolysis with the unwinding of duplex DNA by translocating in the 3'-5' direction.. The enzyme catalyses ATP + H2O = ADP + phosphate + H(+). Functionally, the heterodimer acts as both an ATP-dependent DNA helicase and an ATP-dependent, dual-direction single-stranded exonuclease. Recognizes the chi site generating a DNA molecule suitable for the initiation of homologous recombination. The AddA nuclease domain is required for chi fragment generation; this subunit has the helicase and 3' -&gt; 5' nuclease activities. This Streptococcus pyogenes serotype M28 (strain MGAS6180) protein is ATP-dependent helicase/nuclease subunit A.